We begin with the raw amino-acid sequence, 418 residues long: EPS I polysaccharide export inner membrane protein EpsF (418 aa).

The next 10 membrane-spanning stretches (helical) occupy residues 21 to 41, 45 to 65, 142 to 162, 170 to 190, 222 to 242, 262 to 282, 296 to 316, 326 to 346, 347 to 367, and 377 to 397; these read VLVV…FPIA, CAAI…LATA, PLMV…IAIY, YVVF…GSAI, AGTH…MLFL, LLVL…EFVM, SAWE…AWLF, LTYF…PAVG, ARLF…FFFA, and KTLA…IVDV.

To S.marcescens SfuB.

The protein localises to the cell inner membrane. Its function is as follows. Probably involved in polymerization and/or export of exopolysaccharide EPS I which functions as a virulence factor. May play a role in export of EPS I or its intermediates across the membranes. In Ralstonia solanacearum (Pseudomonas solanacearum), this protein is EPS I polysaccharide export inner membrane protein EpsF (epsF).